A 1013-amino-acid chain; its full sequence is MDIS1-interacting receptor like kinase 1 (1013 aa).

The signal sequence occupies residues 1–23; that stretch reads MKMKIIVLFLYYCYIGSTSSVLA. The Extracellular segment spans residues 24–633; sequence SIDNVNELSV…SSHSSLHGKR (610 aa). Asparagine 61, asparagine 82, asparagine 101, asparagine 137, asparagine 146, asparagine 151, and asparagine 155 each carry an N-linked (GlcNAc...) asparagine glycan. LRR repeat units lie at residues 70–94, 95–117, 119–137, 139–163, 164–186, 187–213, 215–234, 235–259, 260–283, 284–307, 308–331, 333–355, 357–379, 381–403, 405–426, 427–451, 453–475, 477–498, 499–523, 525–547, 548–571, and 573–595; these read NGNV…ISQL, SSLV…SIPP, KSID…LFSN, SLGL…LGNL, VSLE…SFKN, LQKL…QLPS, ETAI…EFGN, INSL…LGKL, KSLE…IGSI, TTLK…ITKL, KNLQ…ISSL, QLQV…LGKN, PLQW…LCNK, NLTK…LSTC, SLVR…GFGK, LEKL…ISDS, SLSF…ILSI, NLQA…QFQD, CPSL…IASC, KLVS…ITTM, SALA…IGTS, and ALEL…GFLK. The N-linked (GlcNAc...) asparagine glycan is linked to asparagine 199. Residue asparagine 271 is glycosylated (N-linked (GlcNAc...) asparagine). Residue asparagine 341 is glycosylated (N-linked (GlcNAc...) asparagine). Asparagine 381, asparagine 389, and asparagine 417 each carry an N-linked (GlcNAc...) asparagine glycan. 3 N-linked (GlcNAc...) asparagine glycosylation sites follow: asparagine 535, asparagine 557, and asparagine 578. The chain crosses the membrane as a helical span at residues 634-654; that stretch reads IVAGWLIGIASVLALGILTIV. The Cytoplasmic portion of the chain corresponds to 655 to 1013; that stretch reads TRTLYKKWYS…FSTSPVNGLL (359 aa). Threonine 691 bears the Phosphothreonine mark. One can recognise a Protein kinase domain in the interval 699–983; that stretch reads IKESNMIGMG…SMLGEAKPRR (285 aa). Residues 705-713 and lysine 728 each bind ATP; that span reads IGMGATGIV. Threonine 710 is modified (phosphothreonine; by autocatalysis). A phosphothreonine; by autocatalysis mark is found at threonine 741 and threonine 742. Residues tyrosine 777 and tyrosine 818 each carry the phosphotyrosine modification. The Proton acceptor role is filled by aspartate 831. Phosphothreonine; by autocatalysis is present on threonine 862. Serine 864 is modified (phosphoserine; by autocatalysis). Tyrosine 872 is modified (phosphotyrosine). Tyrosine 879 carries the phosphotyrosine; by autocatalysis modification. Threonine 880 and threonine 992 each carry phosphothreonine; by autocatalysis. Positions 976–1013 are disordered; that stretch reads LGEAKPRRKSNSNEENTSRSLAEKHSSVFSTSPVNGLL. Residues 1002–1013 are compositionally biased toward polar residues; the sequence is SVFSTSPVNGLL.

It belongs to the protein kinase superfamily. Ser/Thr protein kinase family. In terms of assembly, homodimer. Interacts with MDIS1 and LURE1.2. Post-translationally, autophosphorylation induced by the interaction with LURE1.2. In terms of tissue distribution, expressed in pollen tubes.

It is found in the cell membrane. It carries out the reaction L-seryl-[protein] + ATP = O-phospho-L-seryl-[protein] + ADP + H(+). The enzyme catalyses L-threonyl-[protein] + ATP = O-phospho-L-threonyl-[protein] + ADP + H(+). Functionally, involved in the regulation of procambium maintenance and polarity during vascular-tissue development. Involved in the pollen tube perception of the female signal. Phosphorylates MDSI1. The sequence is that of MDIS1-interacting receptor like kinase 1 from Arabidopsis thaliana (Mouse-ear cress).